We begin with the raw amino-acid sequence, 410 residues long: E3 SUMO-protein ligase EGR2 (410 aa).

The span at 68 to 83 (PPASTTASSSVTSASP) shows a compositional bias: low complexity. 3 disordered regions span residues 68-95 (PPASTTASSSVTSASPNPLATGPLGVCT), 101-120 (PELDHLYSPPPPPPPYSGCT), and 127-151 (PSAFLSPPTTSTSSLAYQPPPSYPS). The HCFC1-binding-motif (HBM) signature appears at 104–107 (DHLY). The segment covering 127-143 (PSAFLSPPTTSTSSLAY) has biased composition (low complexity). Lysine 188 carries the N6-acetyllysine modification. Residues 217–286 (PSAGVTGPGA…PYPCPAEGCD (70 aa)) form a disordered region. The span at 222 to 231 (TGPGASGGSE) shows a compositional bias: gly residues. Residues 237–248 (GSGSAAVTTSPY) are compositionally biased toward polar residues. C2H2-type zinc fingers lie at residues 278–302 (YPCPAEGCDRRFSRSDELTRHIRIH), 308–330 (FQCRICMRNFSRSDHLTTHIRTH), and 336–358 (FACDYCGRKFARSDERKRHTKIH). Residues 349–410 (DERKRHTKIH…LACTSRTRTP (62 aa)) are disordered. Over residues 353–363 (RHTKIHLRQKE) the composition is skewed to basic residues. Positions 367 to 380 (SAPSSSASAQPSAS) are enriched in low complexity.

The protein belongs to the EGR C2H2-type zinc-finger protein family. Interacts with HCFC1. Interacts with WWP2. Interacts with UBC9. Interacts with CITED1. Interacts (via phosphorylated form) with SFN. In terms of processing, ubiquitinated by WWP2 leading to proteasomal degradation. Post-translationally, acetylated. May be deacetylated by HDAC6, HDAC10 or SIRT1.

Its subcellular location is the nucleus. It functions in the pathway protein modification; protein sumoylation. Functionally, sequence-specific DNA-binding transcription factor. Plays a role in hindbrain segmentation by regulating the expression of a subset of homeobox containing genes and in Schwann cell myelination by regulating the expression of genes involved in the formation and maintenance of myelin. Binds to two EGR2-consensus sites EGR2A (5'-CTGTAGGAG-3') and EGR2B (5'-ATGTAGGTG-3') in the HOXB3 enhancer and promotes HOXB3 transcriptional activation. Binds to specific DNA sites located in the promoter region of HOXA4, HOXB2 and ERBB2. Regulates hindbrain segmentation by controlling the expression of Hox genes, such as HOXA4, HOXB3 and HOXB2, and thereby specifying odd and even rhombomeres. Promotes the expression of HOXB3 in the rhombomere r5 in the hindbrain. Regulates myelination in the peripheral nervous system after birth, possibly by regulating the expression of myelin proteins, such as MPZ, and by promoting the differentiation of Schwann cells. Involved in the development of the jaw openener musculature, probably by playing a role in its innervation through trigeminal motor neurons. May play a role in adipogenesis, possibly by regulating the expression of CEBPB. In terms of biological role, E3 SUMO-protein ligase helping SUMO1 conjugation to its coregulators NAB1 and NAB2, whose sumoylation down-regulates EGR2 transcriptional activity. The chain is E3 SUMO-protein ligase EGR2 (EGR2) from Cricetulus griseus (Chinese hamster).